A 247-amino-acid chain; its full sequence is 6-phosphogluconolactonase (247 aa).

Belongs to the glucosamine/galactosamine-6-phosphate isomerase family. 6-phosphogluconolactonase subfamily.

The catalysed reaction is 6-phospho-D-glucono-1,5-lactone + H2O = 6-phospho-D-gluconate + H(+). Its pathway is carbohydrate degradation; pentose phosphate pathway; D-ribulose 5-phosphate from D-glucose 6-phosphate (oxidative stage): step 2/3. In terms of biological role, hydrolysis of 6-phosphogluconolactone to 6-phosphogluconate. The protein is 6-phosphogluconolactonase (pgl) of Mycobacterium leprae (strain TN).